We begin with the raw amino-acid sequence, 316 residues long: Acetaldehyde dehydrogenase (316 aa).

11-14 (SGNI) is a binding site for NAD(+). Cys131 functions as the Acyl-thioester intermediate in the catalytic mechanism. NAD(+) is bound by residues 162 to 170 (SAGPGTRAN) and Asn289.

This sequence belongs to the acetaldehyde dehydrogenase family. Interacts with MhpE.

It catalyses the reaction acetaldehyde + NAD(+) + CoA = acetyl-CoA + NADH + H(+). Its pathway is aromatic compound metabolism; 3-phenylpropanoate degradation. Functionally, catalyzes the conversion of acetaldehyde to acetyl-CoA, using NAD(+) and coenzyme A. Is the final enzyme in the meta-cleavage pathway for the degradation of aromatic compounds. The sequence is that of Acetaldehyde dehydrogenase from Shigella sonnei (strain Ss046).